Consider the following 140-residue polypeptide: Con-Ins Im2 (140 aa).

Residues 1-29 (MALTWPSSPPVLLTLLLSLLALQLCAVYG) form the signal peptide. Intrachain disulfides connect C35/C123, C50/C126, C62/C139, and C125/C130. Positions 64–110 (PRGYVSNWFTKRSAPNKPAETFVDQNLRGVLLNKREALSYLRPREPR) are cleaved as a propeptide — c peptide. E134 is modified (4-carboxyglutamate; partial).

The protein belongs to the insulin family. In terms of assembly, heterodimer of A and B chains; disulfide-linked. In terms of tissue distribution, expressed by the venom gland.

It localises to the secreted. In terms of biological role, this venom insulin facilitates prey capture by rapidly inducing hypoglycemic shock. Intraperitoneal injection of this peptide into zebrafish lowers blood glucose with the same potency than human insulin. In vivo, when applied to water, this peptide reduces overall locomotor activity of zebrafish larvae, observed as a significant decrease in the percentage of time spent swimming and movement frequency. The polypeptide is Con-Ins Im2 (Conus imperialis (Imperial cone)).